We begin with the raw amino-acid sequence, 89 residues long: Large ribosomal subunit protein bL27 (89 aa).

Residues 1 to 21 (MAHKKAGGSSRNGRDSESKRL) are disordered.

This sequence belongs to the bacterial ribosomal protein bL27 family.

This Chelativorans sp. (strain BNC1) protein is Large ribosomal subunit protein bL27.